A 676-amino-acid polypeptide reads, in one-letter code: UvrABC system protein C (676 aa).

The GIY-YIG domain maps to 16-95 (VEPGVYRFRD…IKEFDPRFNI (80 aa)). A UVR domain is found at 208-243 (DRLVRDLERKMTAAAEDLDFERAARLRDDIGALRRA).

Belongs to the UvrC family. As to quaternary structure, interacts with UvrB in an incision complex.

It localises to the cytoplasm. Its function is as follows. The UvrABC repair system catalyzes the recognition and processing of DNA lesions. UvrC both incises the 5' and 3' sides of the lesion. The N-terminal half is responsible for the 3' incision and the C-terminal half is responsible for the 5' incision. The chain is UvrABC system protein C from Mycobacterium sp. (strain KMS).